Here is a 559-residue protein sequence, read N- to C-terminus: S-layer protein (559 aa).

The signal sequence occupies residues 1–28 (MAMSLKKIGAIAVGGAMVASALASGVMA). 5 N-linked (GlcNAc...) asparagine glycosylation sites follow: Asn108, Asn130, Asn155, Asn222, and Asn373.

The protein belongs to the Mj S-layer protein family.

It localises to the secreted. The protein resides in the cell wall. The protein localises to the S-layer. In terms of biological role, S-layer protein. The S-layer is a paracrystalline mono-layered assembly of proteins which coat the surface of the cell. The chain is S-layer protein from Methanothermococcus thermolithotrophicus (Methanococcus thermolithotrophicus).